A 167-amino-acid polypeptide reads, in one-letter code: uncharacterized protein (167 aa).

Residues His-48, His-127, and His-131 each contribute to the a divalent metal cation site.

Belongs to the DinB family.

This is an uncharacterized protein from Bacillus subtilis (strain 168).